The sequence spans 161 residues: Phosphotransferase enzyme IIB component GlvB (161 aa).

A helical transmembrane segment spans residues 10 to 32 (LTQIAIGLCFTLLYFVVFRTLIL). The PTS EIIB type-1 domain occupies 70–152 (LDQAAGILQA…DSLINSHQSA (83 aa)). Cysteine 92 acts as the Phosphocysteine intermediate in catalysis.

It localises to the cell inner membrane. The phosphoenolpyruvate-dependent sugar phosphotransferase system (sugar PTS), a major carbohydrate active -transport system, catalyzes the phosphorylation of incoming sugar substrates concomitantly with their translocation across the cell membrane. This operon may be cryptic in wild-type K12 strains. This is Phosphotransferase enzyme IIB component GlvB from Escherichia coli (strain K12).